Here is a 178-residue protein sequence, read N- to C-terminus: Mediator of RNA polymerase II transcription subunit 21 (178 aa).

Residues 36–91 (DDDDVNSYSNMAANAPLPQSQQQRQQQKKQQEPQQEIEQPQQQSNPESKSISPPKE) form a disordered region. A compositionally biased stretch (low complexity) spans 67 to 85 (EPQQEIEQPQQQSNPESKS). Positions 128–169 (NEQMNLINELSDKLQAIEEERIQKIKEKDNLLNLLESMIKEV) form a coiled coil.

This sequence belongs to the Mediator complex subunit 21 family. As to quaternary structure, component of the Mediator complex.

The protein resides in the nucleus. Its function is as follows. Component of the Mediator complex, a coactivator involved in the regulated transcription of nearly all RNA polymerase II-dependent genes. Mediator functions as a bridge to convey information from gene-specific regulatory proteins to the basal RNA polymerase II transcription machinery. Mediator is recruited to promoters by direct interactions with regulatory proteins and serves as a scaffold for the assembly of a functional preinitiation complex with RNA polymerase II and the general transcription factors. The chain is Mediator of RNA polymerase II transcription subunit 21 (SRB7) from Candida albicans (strain SC5314 / ATCC MYA-2876) (Yeast).